Reading from the N-terminus, the 280-residue chain is Urease accessory protein UreD (280 aa).

Belongs to the UreD family. As to quaternary structure, ureD, UreF and UreG form a complex that acts as a GTP-hydrolysis-dependent molecular chaperone, activating the urease apoprotein by helping to assemble the nickel containing metallocenter of UreC. The UreE protein probably delivers the nickel.

It is found in the cytoplasm. Required for maturation of urease via the functional incorporation of the urease nickel metallocenter. The protein is Urease accessory protein UreD of Pseudomonas aeruginosa (strain ATCC 15692 / DSM 22644 / CIP 104116 / JCM 14847 / LMG 12228 / 1C / PRS 101 / PAO1).